The primary structure comprises 305 residues: Aspartate carbamoyltransferase catalytic subunit (305 aa).

Residues Arg56 and Thr57 each contribute to the carbamoyl phosphate site. Lys85 contacts L-aspartate. The carbamoyl phosphate site is built by Arg106, His134, and Gln137. L-aspartate contacts are provided by Arg167 and Arg227. The carbamoyl phosphate site is built by Leu266 and Pro267.

The protein belongs to the aspartate/ornithine carbamoyltransferase superfamily. ATCase family. As to quaternary structure, heterooligomer of catalytic and regulatory chains.

The enzyme catalyses carbamoyl phosphate + L-aspartate = N-carbamoyl-L-aspartate + phosphate + H(+). It participates in pyrimidine metabolism; UMP biosynthesis via de novo pathway; (S)-dihydroorotate from bicarbonate: step 2/3. Its function is as follows. Catalyzes the condensation of carbamoyl phosphate and aspartate to form carbamoyl aspartate and inorganic phosphate, the committed step in the de novo pyrimidine nucleotide biosynthesis pathway. This chain is Aspartate carbamoyltransferase catalytic subunit, found in Thermoplasma acidophilum (strain ATCC 25905 / DSM 1728 / JCM 9062 / NBRC 15155 / AMRC-C165).